A 249-amino-acid polypeptide reads, in one-letter code: Protein obstructor-E (249 aa).

Residues 1–21 form the signal peptide; it reads MAKILISALLCVAMFGSMALG. Residues 22–80 enclose the Chitin-binding type-2 1 domain; the sequence is SPECPTPNGRFASGDQCDSYTECQDGTPVEKLCPDGLLFHQRTKATGECTYAPYSTCKE. C54 and C70 are joined by a disulfide. N88 is a glycosylation site (N-linked (GlcNAc...) asparagine). 2 Chitin-binding type-2 domains span residues 90–148 and 170–227; these read TEEC…SCNA and VDVS…ECYA. Disulfide bonds link C124–C137 and C203–C216.

Uniformly expressed throughout the cuticle of third instar larva.

It is found in the secreted. The protein resides in the extracellular space. It localises to the extracellular matrix. Functionally, chitin-binding protein that is important for the longitudinal contraction and lateral expansion of the larval cuticle during its conversion into the oval-shaped puparium case. Essential for survival to the second instar larval stage. Confers the orientated contractility and expandability of the larval cuticle by regulating the arrangement of chitin and the formation of supracellular ridges on the cuticle of third instar larvae. Essential for determining pupal body shape; required for the orientated shape change of the cuticle during metamorphosis which involves changes in the morphology of the supracellular ridges. Its function is as follows. Mainly involved in regulating pupal shape. Mainly involved in larvae survival, possibly by maintaining the normal morphology of the larval hindgut during development. The protein is Protein obstructor-E of Drosophila melanogaster (Fruit fly).